The primary structure comprises 282 residues: Bifunctional protein FolD 2 (282 aa).

NADP(+)-binding positions include 164-166 and serine 189; that span reads GRS.

Belongs to the tetrahydrofolate dehydrogenase/cyclohydrolase family. Homodimer.

The catalysed reaction is (6R)-5,10-methylene-5,6,7,8-tetrahydrofolate + NADP(+) = (6R)-5,10-methenyltetrahydrofolate + NADPH. It catalyses the reaction (6R)-5,10-methenyltetrahydrofolate + H2O = (6R)-10-formyltetrahydrofolate + H(+). Its pathway is one-carbon metabolism; tetrahydrofolate interconversion. In terms of biological role, catalyzes the oxidation of 5,10-methylenetetrahydrofolate to 5,10-methenyltetrahydrofolate and then the hydrolysis of 5,10-methenyltetrahydrofolate to 10-formyltetrahydrofolate. In Lactobacillus johnsonii (strain CNCM I-12250 / La1 / NCC 533), this protein is Bifunctional protein FolD 2.